We begin with the raw amino-acid sequence, 286 residues long: 33 kDa chaperonin (286 aa).

Cystine bridges form between C225-C227 and C258-C261.

It belongs to the HSP33 family. In terms of processing, under oxidizing conditions two disulfide bonds are formed involving the reactive cysteines. Under reducing conditions zinc is bound to the reactive cysteines and the protein is inactive.

It localises to the cytoplasm. In terms of biological role, redox regulated molecular chaperone. Protects both thermally unfolding and oxidatively damaged proteins from irreversible aggregation. Plays an important role in the bacterial defense system toward oxidative stress. In Shewanella putrefaciens (strain CN-32 / ATCC BAA-453), this protein is 33 kDa chaperonin.